The sequence spans 64 residues: Large ribosomal subunit protein bL33 (64 aa).

Belongs to the bacterial ribosomal protein bL33 family.

This chain is Large ribosomal subunit protein bL33, found in Nostoc sp. (strain PCC 7120 / SAG 25.82 / UTEX 2576).